The chain runs to 201 residues: NADH-quinone oxidoreductase subunit C (201 aa).

The protein belongs to the complex I 30 kDa subunit family. NDH-1 is composed of 14 different subunits. Subunits NuoB, C, D, E, F, and G constitute the peripheral sector of the complex.

It is found in the cell inner membrane. It carries out the reaction a quinone + NADH + 5 H(+)(in) = a quinol + NAD(+) + 4 H(+)(out). NDH-1 shuttles electrons from NADH, via FMN and iron-sulfur (Fe-S) centers, to quinones in the respiratory chain. The immediate electron acceptor for the enzyme in this species is believed to be ubiquinone. Couples the redox reaction to proton translocation (for every two electrons transferred, four hydrogen ions are translocated across the cytoplasmic membrane), and thus conserves the redox energy in a proton gradient. The chain is NADH-quinone oxidoreductase subunit C from Dechloromonas aromatica (strain RCB).